A 267-amino-acid polypeptide reads, in one-letter code: Serine/threonine-protein kinase 1 (267 aa).

A Protein kinase domain is found at 18–266 (IQNNVRLVDG…YETVIKHSFL (249 aa)). ATP-binding positions include 24–32 (LVDGKFGKM) and K47. D134 acts as the Proton acceptor in catalysis.

Belongs to the protein kinase superfamily. Ser/Thr protein kinase family.

The catalysed reaction is L-seryl-[protein] + ATP = O-phospho-L-seryl-[protein] + ADP + H(+). It carries out the reaction L-threonyl-[protein] + ATP = O-phospho-L-threonyl-[protein] + ADP + H(+). The sequence is that of Serine/threonine-protein kinase 1 (PK1) from Heliothis zea nuclear polyhedrosis virus (HzSNPV).